We begin with the raw amino-acid sequence, 436 residues long: Homeobox protein PKNOX1 (436 aa).

The tract at residues 23–50 (ELKTEQDPNCSDPDAEGVSPPPIESQTP) is disordered. Phosphoserine occurs at positions 33 and 41. One can recognise an MEIS N-terminal domain in the interval 80-163 (GSEGTTSASF…MNSETLLSGE (84 aa)). Residues 259-321 (SKNKRGVLPK…NARRRILQPM (63 aa)) constitute a DNA-binding region (homeobox; TALE-type). The interval 401 to 436 (AGQSEDESVDSTEDEGGALAPTHISGLVLENSDSLQ) is disordered. Positions 404-416 (SEDESVDSTEDEG) are enriched in acidic residues.

Belongs to the TALE/MEIS homeobox family. In terms of assembly, interacts with MN1.

The protein localises to the nucleus. Its function is as follows. Activates transcription in the presence of PBX1A and HOXA1. (Microbial infection) In complex with PBX1, binds to the 5'-TGATTGAC-3' consensus sequence in the U5 region of Moloney murine leukemia virus and promotes viral transcription. This Mus musculus (Mouse) protein is Homeobox protein PKNOX1.